Here is a 95-residue protein sequence, read N- to C-terminus: Alpha-conotoxin-like Ms20.5 (95 aa).

Positions 1-24 are cleaved as a signal peptide; that stretch reads MPKLAVVLLVLLILPLSYFDAAGG. Positions 25 to 45 are excised as a propeptide; the sequence is QAAEGDRRGNGLARYLQRGGR. Residue E50 is modified to 4-carboxyglutamate. P56 is modified (4-hydroxyproline). Disulfide bonds link C64-C73, C69-C81, C74-C91, and C79-C93.

The protein belongs to the conotoxin D superfamily. In terms of assembly, hetero-, homo- or pseudo-homodimer (identical sequence, different post-translational modifications). Heterodimer of [carboxy'Glu-49', hydroxy'Pro-55']Ms20.3 and [carboxyGlu-50, hydroxyPro-56]Ms20.5 may exist. Expressed by the venom duct.

It localises to the secreted. Its function is as follows. Alpha-conotoxins act on postsynaptic membranes, they bind to the nicotinic acetylcholine receptors (nAChR) and thus inhibit them. Through its two C-terminal domains, this homodimeric protein would bind to two nAChR allosteric sites, located outside the nAChR C-loop of the principal binding face and at the adjacent binding interface in a clockwise direction. This toxin specifically blocks mammalian neuronal nAChR of the alpha-7/CHRNA7, alpha-3-beta-2/CHRNA3-CHRNB2 and alpha-4-beta-2/CHRNA4-CHRNB2 subtypes. The protein is Alpha-conotoxin-like Ms20.5 of Conus mustelinus (Weasel cone).